A 108-amino-acid chain; its full sequence is Small ribosomal subunit protein bS16 (108 aa).

A disordered region spans residues 82 to 108; the sequence is ESKFSKNTQTENKKPVSKKTTKKSKDN. Positions 96-108 are enriched in basic residues; that stretch reads PVSKKTTKKSKDN.

Belongs to the bacterial ribosomal protein bS16 family.

The protein is Small ribosomal subunit protein bS16 of Mycoplasma capricolum subsp. capricolum (strain California kid / ATCC 27343 / NCTC 10154).